Here is a 426-residue protein sequence, read N- to C-terminus: Phosphoribosylamine--glycine ligase (426 aa).

Residues 113–320 enclose the ATP-grasp domain; the sequence is KSLMTEAKIP…LLELLYRAST (208 aa). Residue 139–200 participates in ATP binding; that stretch reads LESKSIPIVI…EEFMEGQEAS (62 aa). 2 residues coordinate Mg(2+): Glu-290 and Asn-292.

This sequence belongs to the GARS family. Mg(2+) is required as a cofactor. Mn(2+) serves as cofactor.

It catalyses the reaction 5-phospho-beta-D-ribosylamine + glycine + ATP = N(1)-(5-phospho-beta-D-ribosyl)glycinamide + ADP + phosphate + H(+). Its pathway is purine metabolism; IMP biosynthesis via de novo pathway; N(1)-(5-phospho-D-ribosyl)glycinamide from 5-phospho-alpha-D-ribose 1-diphosphate: step 2/2. This chain is Phosphoribosylamine--glycine ligase, found in Leptospira interrogans serogroup Icterohaemorrhagiae serovar Lai (strain 56601).